The following is a 2410-amino-acid chain: Coprinoferrin synthetase (2410 aa).

Residues 237–646 (LERRAKTNPH…GRIDTQIKVR (410 aa)) are adenylation 1. A Carrier 1 domain is found at 783–860 (RDCTPLEAEV…DIAQLVHVST (78 aa)). Ser820 is modified (O-(pantetheine 4'-phosphoryl)serine). The condensation 1 stretch occupies residues 891–1260 (DILPPFPVQE…SVEAVVNVHD (370 aa)). The tract at residues 1298–1317 (ELPLPSRRSPEPVRKVNDDE) is disordered. Residues 1305–1314 (RSPEPVRKVN) are compositionally biased toward basic and acidic residues. The Carrier 2 domain occupies 1324–1400 (LLDPVVVADL…RLARVVSNNK (77 aa)). Ser1361 is subject to O-(pantetheine 4'-phosphoryl)serine. Residues 1436–1839 (IIPSTALQSG…RIGRTFSVPS (404 aa)) are condensation 2. The Carrier 3 domain maps to 1858–1932 (VQAGIIHPVL…DLVLQATEIK (75 aa)). O-(pantetheine 4'-phosphoryl)serine is present on Ser1893. The tract at residues 1992 to 2315 (FQYLFTFKLP…TPIFNVNVNV (324 aa)) is condensation 3.

Belongs to the NRP synthetase family.

It participates in siderophore biosynthesis. Functionally, nonribosomal peptide synthase; part of the gene cluster that mediates the biosynthesis of coprinoferrin, an acylated tripeptide hydroxamate siderophore. The biosynthesis of coprinoferrin depends on the hydroxylation of ornithine to N(5)-hydroxyornithine, catalyzed by the monooxygenase cpf2. The second step, the acylation of N(5)-hydroxy-L-ornithine to yield N(5)-hexanoyl-N(5)-hydroxyl-L-ornithine is catalyzed by a not yet identified acyltransferase. Finally, assembly of coprinoferrin is catalyzed by the nonribosomal peptide synthase (NRPS) cpf1 via amide bond formation between three N(5)-hexanoyl-N(5)-hydroxyl-L-ornithine molecules to release the linear trimer. Interestingly, proteins seemingly not directly related to biosynthesis, such as transcription factors, replication factors, and autophagy-related proteins, are conserved among the clusters homologous to the coprinoferrin cluster, suggesting that the cluster may also play developmental and cell biological functions. The sequence is that of Coprinoferrin synthetase from Coprinopsis cinerea (strain Okayama-7 / 130 / ATCC MYA-4618 / FGSC 9003) (Inky cap fungus).